A 355-amino-acid chain; its full sequence is Methyltransferase FUS9 (355 aa).

S-adenosyl-L-homocysteine is bound by residues Tyr18, Asn63, Asp86, Ser123, and Phe124. Mg(2+) is bound at residue Phe231.

It belongs to the methyltransferase superfamily. Type-7 methyltransferase family. Mg(2+) serves as cofactor.

Its pathway is mycotoxin biosynthesis. In terms of biological role, methyltransferase; part of the gene cluster that mediates the biosynthesis of the mycotoxin fusarin C. Within the cluster, FUS1, FUS2, FUS8 and FUS9 are sufficient for fusarin production. The roles of the other FUS members are yet undetermined. The fusarin C synthetase FUS1 is responsible for the condensation of one acetyl-coenzyme A (CoA) unit with six malonyl-CoA units and the amide linkage of the arising heptaketide and homoserine, subsequently releasing the first intermediate, prefusarin, as an alcohol with an open ring structure. The cytochrome P450 monooxygenase FUS8 participates in multiple oxidation processes at carbon C-20 and is able to use the FUS1 product as substrate, resulting in formation of 20-hydroxy-prefusarin. This reaction seems to be essential before the 2-pyrrolidone ring closure can be catalyzed by FUS2, generating 20-hydroxy-fusarin. FUS8 is able to further oxidizes carbon C-20 after ring closure, resulting in the formation of carboxy-fusarin C. As the last step, FUS9 methylates the hydroxyl group at C-21 to generate fusarin C. Fusarin C can then rearrange to epi-fusarin C, the (z)-isomers, and fusarin A and fusarin D. The protein is Methyltransferase FUS9 of Gibberella fujikuroi (strain CBS 195.34 / IMI 58289 / NRRL A-6831) (Bakanae and foot rot disease fungus).